Reading from the N-terminus, the 33-residue chain is MIELLLFGIILGLISCVLAGLFVSAYYQYKRNR.

A helical transmembrane segment spans residues 5-25 (LLFGIILGLISCVLAGLFVSA).

The protein belongs to the PetG family. As to quaternary structure, the 4 large subunits of the cytochrome b6-f complex are cytochrome b6, subunit IV (17 kDa polypeptide, PetD), cytochrome f and the Rieske protein, while the 4 small subunits are PetG, PetL, PetM and PetN. The complex functions as a dimer.

The protein resides in the plastid. It localises to the chloroplast thylakoid membrane. Component of the cytochrome b6-f complex, which mediates electron transfer between photosystem II (PSII) and photosystem I (PSI), cyclic electron flow around PSI, and state transitions. PetG is required for either the stability or assembly of the cytochrome b6-f complex. The sequence is that of Cytochrome b6-f complex subunit 5 from Bigelowiella natans (Pedinomonas minutissima).